We begin with the raw amino-acid sequence, 275 residues long: MKRNILALVVVVALISQSRPAESAGGTIIATLSKIPLSTLASALNTALETGASVASAAAAATSSDYSVTCVIEVENWTKHLMKYPVVQIANSGGLLTVAKNVLPAEIQSFAMRKAWGANGVYGTVSWVLGQTNRRVVIMWSAPYNFDFYSNWLAVGMSRPGLAVPSSRSTWFDLMYYGNSNADISFVRGEYYHSVDPIYFKNSEWEIEGSMNNIHKARVRATVKPIKTMDLASSILTKLEALAGANGKRAIQQELARRAEEEKQRKRKALDEMLK.

A signal peptide spans 1-23; sequence MKRNILALVVVVALISQSRPAES. The segment at 23-32 is plays an important role in the hemolytic activity; that stretch reads SAGGTIIATL. An N-terminal region region spans residues 49–67; it reads ETGASVASAAAAATSSDYS. Residues G123, S141, P143, Y176, and Y177 each contribute to the phosphocholine site. The interval 141–156 is trp-rich region, which is important for the binding to lipid membrane; that stretch reads SAPYNFDFYSNWLAVG. A propeptide spanning residues 249 to 275 is cleaved from the precursor; that stretch reads RAIQQELARRAEEEKQRKRKALDEMLK.

Belongs to the actinoporin family. Sea anemone subfamily. Octamer or nonamer in membranes. Monomer in the soluble state. In terms of tissue distribution, salivary gland.

It localises to the secreted. It is found in the nematocyst. The protein resides in the target cell membrane. In terms of biological role, pore-forming protein that forms cations-selective hydrophilic pores of around 1 nm and causes cardiac stimulation and cytolysis. Pore formation is a multi-step process that involves specific recognition of membrane sphingomyelin (but neither cholesterol nor phosphatidylcholine) using aromatic rich region and adjacent phosphocholine (POC) binding site, firm binding to the membrane (mainly driven by hydrophobic interactions) accompanied by the transfer of the N-terminal region to the lipid-water interface and finally pore formation after oligomerization of monomers. Exhibits both hemolytic and lethal activities. Gangliosides potently inhibits the hemolytic activity. The protein is Echotoxin-2 of Monoplex parthenopeus (Giant triton).